The following is a 1058-amino-acid chain: Ubiquitin-like modifier-activating enzyme 1 (1058 aa).

Residues 1-47 (MSSSPLSKKRRVSGPDPKPGSNCSPAQSVLSEVPSVPTNGMAKNGSE) are disordered. At serine 2 the chain carries N-acetylserine. Serine 2 is modified (N-acetylalanine). Phosphoserine is present on serine 4. The short motif at 5–11 (PLSKKRR) is the Nuclear localization signal element. 4 positions are modified to phosphoserine: serine 13, serine 21, serine 24, and serine 46. The span at 21 to 30 (SNCSPAQSVL) shows a compositional bias: polar residues. Phosphotyrosine is present on tyrosine 55. Tandem repeats lie at residues 63-199 (GHEA…GQLF) and 459-611 (GSDL…QVVI). The 2 approximate repeats stretch occupies residues 63–611 (GHEAMKRLQT…GTKGNVQVVI (549 aa)). Residues alanine 478, aspartate 504, arginine 515, lysine 528, and 576-577 (DN) contribute to the ATP site. At lysine 528 the chain carries N6-succinyllysine. The active-site Glycyl thioester intermediate is cysteine 632. Position 671 is an N6-acetyllysine (lysine 671). A Phosphothreonine modification is found at threonine 800. 4 positions are modified to phosphoserine: serine 810, serine 816, serine 820, and serine 835. Lysine 980 is modified (N6-acetyllysine).

It belongs to the ubiquitin-activating E1 family. As to quaternary structure, monomer. Interacts with GAN (via BTB domain). In terms of processing, ISGylated. Detected in erythrocytes (at protein level). Ubiquitous.

The protein localises to the cytoplasm. It localises to the mitochondrion. The protein resides in the nucleus. The enzyme catalyses ATP + ubiquitin + [E1 ubiquitin-activating enzyme]-L-cysteine = AMP + diphosphate + S-ubiquitinyl-[E1 ubiquitin-activating enzyme]-L-cysteine.. It participates in protein modification; protein ubiquitination. In terms of biological role, catalyzes the first step in ubiquitin conjugation to mark cellular proteins for degradation through the ubiquitin-proteasome system. Activates ubiquitin by first adenylating its C-terminal glycine residue with ATP, and thereafter linking this residue to the side chain of a cysteine residue in E1, yielding a ubiquitin-E1 thioester and free AMP. Essential for the formation of radiation-induced foci, timely DNA repair and for response to replication stress. Promotes the recruitment of TP53BP1 and BRCA1 at DNA damage sites. This Homo sapiens (Human) protein is Ubiquitin-like modifier-activating enzyme 1 (UBA1).